Consider the following 217-residue polypeptide: Endo-1,4-beta-xylanase (217 aa).

An N-terminal signal peptide occupies residues 1-17 (MQFLIPVVILCVSLVDS). The GH11 domain maps to 20–217 (VLYNNEIGFN…SSGFADITVS (198 aa)). N-linked (GlcNAc...) asparagine glycosylation is found at N56 and N80. The active-site Nucleophile is E107. E204 functions as the Proton donor in the catalytic mechanism.

The protein belongs to the glycosyl hydrolase 11 (cellulase G) family. As to expression, expressed in larval carcasses and gut, and adult gut.

Its subcellular location is the secreted. It catalyses the reaction Endohydrolysis of (1-&gt;4)-beta-D-xylosidic linkages in xylans.. It functions in the pathway glycan degradation; xylan degradation. This is Endo-1,4-beta-xylanase from Phaedon cochleariae (Mustard beetle).